We begin with the raw amino-acid sequence, 70 residues long: Frenatin 4.1 (70 aa).

A signal peptide spans 1–22 (MAFLKKSLFLVLFLGLVNLSIC). The propeptide occupies 23–46 (EEEKREEENKEEEDENEALSEVKR). A Lysine amide modification is found at lysine 68.

Belongs to the frog skin active peptide (FSAP) family. Frenatin subfamily. As to expression, expressed by the skin glands.

The protein localises to the secreted. It is found in the target cell membrane. In terms of biological role, peptide with unknown function. Does not show antimicrobial activity against S.aureus (MIC&gt;512 ug/mL), E.coli (MIC&gt;512 ug/mL) and C.albicans (MIC&gt;512 ug/mL). Does not show hemolytic activity. Functionally, antimicrobial peptide with activity against E.coli (MIC=128 ug/mL or 54 uM) and C.albicans (MIC=256 ug/mL or 108 uM). Does not show activity against S.aureus (MIC&gt;512 ug/mL). Does not show hemolytic activity. The polypeptide is Frenatin 4.1 (Nyctimystes infrafrenatus (White-lipped tree frog)).